The primary structure comprises 267 residues: Mediator of RNA polymerase II transcription subunit 8 (267 aa).

2 coiled-coil regions span residues 1–26 and 116–160; these read MQRE…KNSL and DVEE…EERE. A disordered region spans residues 190–267; that stretch reads GLSNRRPPGQ…KSASMHPYQR (78 aa). Polar residues predominate over residues 227-245; it reads PPNQQQQHMAGVSMSQGSQ.

Belongs to the Mediator complex subunit 8 family. Component of the Mediator complex. May be part of a multisubunit E3 ubiquitin-protein ligase complex.

Its subcellular location is the nucleus. Its pathway is protein modification; protein ubiquitination. Component of the Mediator complex, a coactivator involved in the regulated transcription of nearly all RNA polymerase II-dependent genes. Mediator functions as a bridge to convey information from gene-specific regulatory proteins to the basal RNA polymerase II transcription machinery. Mediator is recruited to promoters by direct interactions with regulatory proteins and serves as a scaffold for the assembly of a functional preinitiation complex with RNA polymerase II and the general transcription factors. May play a role as a target recruitment subunit in E3 ubiquitin-protein ligase complexes and thus in ubiquitination and subsequent proteasomal degradation of target proteins. The sequence is that of Mediator of RNA polymerase II transcription subunit 8 (med8) from Xenopus tropicalis (Western clawed frog).